Reading from the N-terminus, the 65-residue chain is Large ribosomal subunit protein bL35 (65 aa).

Residues 1–45 (MPKMKSHSGAKKRFKKTGNGKIKRKKANKGHLLTKKNAKRKRQLR) are compositionally biased toward basic residues. Residues 1-65 (MPKMKSHSGA…RDRIKRMLST (65 aa)) form a disordered region. Positions 48–57 (VVVDDKANRD) are enriched in basic and acidic residues.

Belongs to the bacterial ribosomal protein bL35 family.

This chain is Large ribosomal subunit protein bL35, found in Salinibacter ruber (strain DSM 13855 / M31).